Here is a 657-residue protein sequence, read N- to C-terminus: Probable Xaa-Pro aminopeptidase P (657 aa).

Mn(2+) contacts are provided by aspartate 453, aspartate 464, glutamate 562, and glutamate 576.

Belongs to the peptidase M24B family. Requires Mn(2+) as cofactor.

The enzyme catalyses Release of any N-terminal amino acid, including proline, that is linked to proline, even from a dipeptide or tripeptide.. Functionally, catalyzes the removal of a penultimate prolyl residue from the N-termini of peptides. In Talaromyces stipitatus (strain ATCC 10500 / CBS 375.48 / QM 6759 / NRRL 1006) (Penicillium stipitatum), this protein is Probable Xaa-Pro aminopeptidase P (ampp).